The following is a 286-amino-acid chain: CCR4-NOT transcription complex subunit 7 (286 aa).

Positions 40, 42, 161, 230, and 278 each coordinate a divalent metal cation.

This sequence belongs to the CAF1 family. In terms of assembly, component of the CCR4-NOT complex. Mn(2+) is required as a cofactor. Mg(2+) serves as cofactor. It depends on Co(2+) as a cofactor.

It localises to the nucleus. The protein resides in the cytoplasm. It carries out the reaction Exonucleolytic cleavage of poly(A) to 5'-AMP.. Has 3'-5' poly(A) exoribonuclease activity for synthetic poly(A) RNA substrate. Catalytic component of the CCR4-NOT complex which is one of the major cellular mRNA deadenylases and is linked to various cellular processes including bulk mRNA degradation, miRNA-mediated repression, translational repression during translational initiation and general transcription regulation. During miRNA-mediated repression the complex also seems to act as translational repressor during translational initiation. Additional complex functions may be a consequence of its influence on mRNA expression. This Danio rerio (Zebrafish) protein is CCR4-NOT transcription complex subunit 7 (cnot7).